The following is a 266-amino-acid chain: Apolipoprotein A-I (266 aa).

Residues 1–18 (MKAVVLTLAVLFLTGSQA) form the signal peptide. Tandem repeats lie at residues 67–88 (LKLL…EQIG) and 89–110 (PVTQ…QEMS). The segment at 67–266 (LKLLDNWDSL…DEAAKKLNAQ (200 aa)) is 10 X approximate tandem repeats. Met109 carries the post-translational modification Methionine sulfoxide. A 3; half-length repeat occupies 111-121 (KDLEEVKQKVQ). 5 tandem repeats follow at residues 122–142 (PYLD…RQKV), 144–165 (PLGA…EKLS), 166–187 (PLGE…AQLA), 188–210 (PYSD…DGGA), and 211–231 (SLAE…EKAK). One copy of the 9; half-length repeat lies at 232–242 (PALEDLRQGLL). Copy 10 of the repeat occupies 243 to 266 (PVLESFKVSLLAAVDEAAKKLNAQ).

The protein belongs to the apolipoprotein A1/A4/E family. Homodimer. Interacts with APOA1BP and CLU. Component of a sperm activating protein complex (SPAP), consisting of APOA1, an immunoglobulin heavy chain, an immunoglobulin light chain and albumin. Interacts with NDRG1. Interacts with SCGB3A2. Interacts with NAXE and YJEFN3. Glycosylated. In terms of processing, palmitoylated. Post-translationally, phosphorylation sites are present in the extracellular medium. As to expression, major protein of plasma HDL, also found in chylomicrons.

It localises to the secreted. In terms of biological role, participates in the reverse transport of cholesterol from tissues to the liver for excretion by promoting cholesterol efflux from tissues and by acting as a cofactor for the lecithin cholesterol acyltransferase (LCAT). As part of the SPAP complex, activates spermatozoa motility. In Ailuropoda melanoleuca (Giant panda), this protein is Apolipoprotein A-I (APOA1).